The following is a 129-amino-acid chain: Small ribosomal subunit protein eS8 (129 aa).

The interval 1 to 29 is disordered; that stretch reads MSVWQGRSRRKPTGGLYRPARKKRKYEMG.

The protein belongs to the eukaryotic ribosomal protein eS8 family. As to quaternary structure, part of the 30S ribosomal subunit.

The protein is Small ribosomal subunit protein eS8 (rps8e) of Methanocaldococcus jannaschii (strain ATCC 43067 / DSM 2661 / JAL-1 / JCM 10045 / NBRC 100440) (Methanococcus jannaschii).